Here is a 37-residue protein sequence, read N- to C-terminus: Potassium channel toxin alpha-KTx 3.9 (37 aa).

Intrachain disulfides connect cysteine 7–cysteine 27, cysteine 13–cysteine 32, and cysteine 17–cysteine 34. The interaction with Ca(2+)-activated K(+) channels stretch occupies residues 25–32; it reads GKCMNRKC.

This sequence belongs to the short scorpion toxin superfamily. Potassium channel inhibitor family. Alpha-KTx 03 subfamily. Expressed by the venom gland.

The protein resides in the secreted. In terms of biological role, binds and inhibits potassium channels. Intracerebroventricular injection into mice induces paralyzing symptoms followed by death. Its binding affinity to rat brain synaptosomes is 5-fold lower than this of KTX 1. This Buthus occitanus tunetanus (Common European scorpion) protein is Potassium channel toxin alpha-KTx 3.9 (KTX3).